The sequence spans 99 residues: Ferredoxin, heterocyst (99 aa).

The region spanning 4–96 (YQVRLINKKE…NCTIKTHQEP (93 aa)) is the 2Fe-2S ferredoxin-type domain. [2Fe-2S] cluster is bound by residues Cys-42, Cys-47, Cys-50, and Cys-80.

It belongs to the 2Fe2S plant-type ferredoxin family. [2Fe-2S] cluster serves as cofactor.

Its function is as follows. Ferredoxins are iron-sulfur proteins that transfer electrons in a wide variety of metabolic reactions. This is Ferredoxin, heterocyst (fdxH) from Microchaete diplosiphon (Fremyella diplosiphon).